The following is a 555-amino-acid chain: Developmental regulatory protein wetA (555 aa).

4 disordered regions span residues 113 to 171 (TGHS…LMRS), 250 to 310 (QSPA…SESL), 419 to 488 (TQAV…RGGK), and 508 to 531 (GVAP…RRRK). Polar residues-rich tracts occupy residues 162 to 171 (QSFSPGLMRS), 259 to 281 (PSAN…SALT), 293 to 310 (SPHS…SESL), 419 to 431 (TQAV…SPSI), and 464 to 488 (SGQS…RGGK).

It belongs to the wetA family.

Its function is as follows. BrlA, abaA and wetA are pivotal regulators of conidiophore development and conidium maturation. They act individually and together to regulate their own expression and that of numerous other sporulation-specific genes. Responsible for activating a set of genes whose products make up the final two conidial wall layers or direct their assembly and, through this activity, is responsible for acquisition of spore dormancy. The sequence is that of Developmental regulatory protein wetA from Emericella nidulans (strain FGSC A4 / ATCC 38163 / CBS 112.46 / NRRL 194 / M139) (Aspergillus nidulans).